The primary structure comprises 482 residues: G patch domain-containing protein 2-like (482 aa).

Residues Ser-31, Ser-86, and Ser-88 each carry the phosphoserine modification. Thr-91 carries the post-translational modification Phosphothreonine. A Glycyl lysine isopeptide (Lys-Gly) (interchain with G-Cter in SUMO2) cross-link involves residue Lys-196. Over residues 198–214 (GRKERMECETDEQKQGS) the composition is skewed to basic and acidic residues. Disordered regions lie at residues 198–247 (GRKE…DDEQ) and 413–482 (KRKR…PGYS). The segment covering 220–230 (ECETSSVCSSS) has biased composition (low complexity). Polar residues predominate over residues 439–450 (TPASQAPKSPSS). Ser-447 and Ser-449 each carry phosphoserine. The span at 456–469 (TSAAEKATDATTAT) shows a compositional bias: low complexity.

The sequence is that of G patch domain-containing protein 2-like (GPATCH2L) from Homo sapiens (Human).